Here is a 258-residue protein sequence, read N- to C-terminus: Acyl-[acyl-carrier-protein]--UDP-N-acetylglucosamine O-acyltransferase (258 aa).

It belongs to the transferase hexapeptide repeat family. LpxA subfamily. As to quaternary structure, homotrimer.

It localises to the cytoplasm. It carries out the reaction a (3R)-hydroxyacyl-[ACP] + UDP-N-acetyl-alpha-D-glucosamine = a UDP-3-O-[(3R)-3-hydroxyacyl]-N-acetyl-alpha-D-glucosamine + holo-[ACP]. Its pathway is glycolipid biosynthesis; lipid IV(A) biosynthesis; lipid IV(A) from (3R)-3-hydroxytetradecanoyl-[acyl-carrier-protein] and UDP-N-acetyl-alpha-D-glucosamine: step 1/6. Functionally, involved in the biosynthesis of lipid A, a phosphorylated glycolipid that anchors the lipopolysaccharide to the outer membrane of the cell. This is Acyl-[acyl-carrier-protein]--UDP-N-acetylglucosamine O-acyltransferase from Neisseria meningitidis serogroup A / serotype 4A (strain DSM 15465 / Z2491).